A 147-amino-acid polypeptide reads, in one-letter code: uncharacterized protein (147 aa).

The protein to B.subtilis XkdM.

This is an uncharacterized protein from Bacillus subtilis (strain 168).